Here is a 581-residue protein sequence, read N- to C-terminus: NADH-quinone oxidoreductase subunit C/D (581 aa).

Residues 1–172 (MSGAELISDL…PPFVMTAARF (172 aa)) form an NADH dehydrogenase I subunit C region. Residues 196 to 581 (ELMILNYGPH…IDYVMSDVDR (386 aa)) are NADH dehydrogenase I subunit D.

It in the N-terminal section; belongs to the complex I 30 kDa subunit family. In the C-terminal section; belongs to the complex I 49 kDa subunit family. NDH-1 is composed of 13 different subunits. Subunits NuoB, CD, E, F, and G constitute the peripheral sector of the complex.

The protein localises to the cell inner membrane. The enzyme catalyses a quinone + NADH + 5 H(+)(in) = a quinol + NAD(+) + 4 H(+)(out). Its function is as follows. NDH-1 shuttles electrons from NADH, via FMN and iron-sulfur (Fe-S) centers, to quinones in the respiratory chain. The immediate electron acceptor for the enzyme in this species is believed to be ubiquinone. Couples the redox reaction to proton translocation (for every two electrons transferred, four hydrogen ions are translocated across the cytoplasmic membrane), and thus conserves the redox energy in a proton gradient. This chain is NADH-quinone oxidoreductase subunit C/D, found in Rhodopseudomonas palustris (strain BisA53).